The following is a 291-amino-acid chain: ATP synthase gamma chain (291 aa).

This sequence belongs to the ATPase gamma chain family. In terms of assembly, F-type ATPases have 2 components, CF(1) - the catalytic core - and CF(0) - the membrane proton channel. CF(1) has five subunits: alpha(3), beta(3), gamma(1), delta(1), epsilon(1). CF(0) has three main subunits: a, b and c.

The protein resides in the cell membrane. Its function is as follows. Produces ATP from ADP in the presence of a proton gradient across the membrane. The gamma chain is believed to be important in regulating ATPase activity and the flow of protons through the CF(0) complex. The protein is ATP synthase gamma chain of Streptococcus pyogenes serotype M3 (strain ATCC BAA-595 / MGAS315).